We begin with the raw amino-acid sequence, 499 residues long: Trichoplein keratin filament-binding protein (499 aa).

Coiled coils occupy residues 17-143 (LEQQ…LYEQ), 169-304 (EQIT…LSAL), and 405-485 (NRER…TQRG). The interval 260–426 (RKMEQCRKKT…RQFTSREKKQ (167 aa)) is trichohyalin/plectin homology domain.

It belongs to the TCHP family.

It is found in the cytoplasm. The protein localises to the cytoskeleton. It localises to the microtubule organizing center. Its subcellular location is the centrosome. Functionally, may act as a 'capping' or 'branching' protein for keratin filaments in the cell periphery. May regulate K8/K18 filament and desmosome organization mainly at the apical or peripheral regions of simple epithelial cells. This is Trichoplein keratin filament-binding protein from Xenopus laevis (African clawed frog).